Here is a 163-residue protein sequence, read N- to C-terminus: Pheromone-binding protein (163 aa).

The N-terminal stretch at M1–Q22 is a signal peptide. 3 disulfides stabilise this stretch: C39/C74, C70/C129, and C117/C138.

It belongs to the PBP/GOBP family. Antenna.

This major soluble protein in olfactory sensilla of male moths might serve to solubilize the extremely hydrophobic pheromone molecules and to transport pheromone through the aqueous lymph to receptors located on olfactory cilia. The sequence is that of Pheromone-binding protein from Heliothis virescens (Tobacco budworm moth).